Here is a 137-residue protein sequence, read N- to C-terminus: Large ribosomal subunit protein eL28 (137 aa).

Position 2 is an N-acetylserine (Ser-2). Glycyl lysine isopeptide (Lys-Gly) (interchain with G-Cter in SUMO2) cross-links involve residues Lys-58 and Lys-65. A Phosphoserine modification is found at Ser-115.

Belongs to the eukaryotic ribosomal protein eL28 family. In terms of assembly, component of the large ribosomal subunit.

The protein localises to the cytoplasm. Its function is as follows. Component of the large ribosomal subunit. The ribosome is a large ribonucleoprotein complex responsible for the synthesis of proteins in the cell. This Bos taurus (Bovine) protein is Large ribosomal subunit protein eL28 (RPL28).